Here is a 190-residue protein sequence, read N- to C-terminus: Selenoprotein S (190 aa).

A helical membrane pass occupies residues 28 to 48; it reads SLLASYGWYILFSCVLLYIVI. The tract at residues 78–90 is VCP/p97-interacting motif (VIM); the sequence is RQEALAAARLRMQ. The segment at 96–190 is disordered; that stretch reads QVEKHKEKQR…RRGPSSGGUS (95 aa). A compositionally biased stretch (basic and acidic residues) spans 97–118; it reads VEKHKEKQRQLEEEKRRQKIEM. Gly residues predominate over residues 160–174; sequence RGGGYNPLTGEGGGT. Position 189 (selenocysteine 189) is a non-standard amino acid, selenocysteine.

The protein belongs to the selenoprotein S family. In terms of assembly, interacts with DERL1 and (via VIM motif) with VCP, suggesting that it forms a membrane complex with DERL1 that serves as a receptor for VCP. Also interacts with DERL2, DERL3 and SELENOK. The SELENOK-SELENOS complex interacts with VCP. Interacts with CCDC47. Truncated SELENOS proteins produced by failed UGA/Sec decoding are ubiquitinated by the CRL2(KLHDC2) and CRL2(KLHDC3) complexes, which recognizes the glycine (Gly) at the C-terminus of truncated SELENOS proteins. Truncated SELENOS proteins produced by failed UGA/Sec decoding are also ubiquitinated by the CRL5(KLHDC1) complex.

It is found in the endoplasmic reticulum membrane. It localises to the cytoplasm. Involved in the degradation process of misfolded endoplasmic reticulum (ER) luminal proteins. Participates in the transfer of misfolded proteins from the ER to the cytosol, where they are destroyed by the proteasome in a ubiquitin-dependent manner. Probably acts by serving as a linker between DERL1, which mediates the retrotranslocation of misfolded proteins into the cytosol, and the ATPase complex VCP, which mediates the translocation and ubiquitination. This chain is Selenoprotein S, found in Rattus norvegicus (Rat).